The following is a 391-amino-acid chain: Pyridinium-3,5-bisthiocarboxylic acid mononucleotide nickel insertion protein (391 aa).

This sequence belongs to the LarC family.

It carries out the reaction Ni(II)-pyridinium-3,5-bisthiocarboxylate mononucleotide = pyridinium-3,5-bisthiocarboxylate mononucleotide + Ni(2+). Functionally, involved in the biosynthesis of a nickel-pincer cofactor ((SCS)Ni(II) pincer complex). Binds Ni(2+), and functions in nickel delivery to pyridinium-3,5-bisthiocarboxylic acid mononucleotide (P2TMN), to form the mature cofactor. Is thus probably required for the activation of nickel-pincer cofactor-dependent enzymes. The chain is Pyridinium-3,5-bisthiocarboxylic acid mononucleotide nickel insertion protein from Staphylococcus saprophyticus subsp. saprophyticus (strain ATCC 15305 / DSM 20229 / NCIMB 8711 / NCTC 7292 / S-41).